A 650-amino-acid chain; its full sequence is Acetyl-coenzyme A synthetase (650 aa).

CoA-binding positions include 191 to 194 (RGGR), Thr-311, and Asn-335. ATP is bound by residues 387–389 (GEP), 411–416 (DTWWQT), Asp-500, and Arg-515. Ser-523 is a binding site for CoA. Arg-526 provides a ligand contact to ATP. Positions 537, 539, and 542 each coordinate Mg(2+). Residue Arg-584 coordinates CoA. Position 609 is an N6-acetyllysine (Lys-609).

Belongs to the ATP-dependent AMP-binding enzyme family. The cofactor is Mg(2+). In terms of processing, acetylated. Deacetylation by the SIR2-homolog deacetylase activates the enzyme.

The enzyme catalyses acetate + ATP + CoA = acetyl-CoA + AMP + diphosphate. Functionally, catalyzes the conversion of acetate into acetyl-CoA (AcCoA), an essential intermediate at the junction of anabolic and catabolic pathways. AcsA undergoes a two-step reaction. In the first half reaction, AcsA combines acetate with ATP to form acetyl-adenylate (AcAMP) intermediate. In the second half reaction, it can then transfer the acetyl group from AcAMP to the sulfhydryl group of CoA, forming the product AcCoA. This Shewanella baltica (strain OS155 / ATCC BAA-1091) protein is Acetyl-coenzyme A synthetase.